The primary structure comprises 539 residues: Membrane protein insertase YidC (539 aa).

5 helical membrane-spanning segments follow: residues 6–26, 341–361, 416–436, 454–474, and 495–515; these read TLLVLLLALVSFLLFQQWQVA, SVIQSFVGNWGVAIICLTFIV, LGGCLPLILQMPIFIALYWAL, LSAQDPYFILPLLMGGSMFLI, and PVMFTFFFLWFPSGLVLYWLV.

Belongs to the OXA1/ALB3/YidC family. Type 1 subfamily. As to quaternary structure, interacts with the Sec translocase complex via SecD. Specifically interacts with transmembrane segments of nascent integral membrane proteins during membrane integration.

The protein resides in the cell inner membrane. In terms of biological role, required for the insertion and/or proper folding and/or complex formation of integral membrane proteins into the membrane. Involved in integration of membrane proteins that insert both dependently and independently of the Sec translocase complex, as well as at least some lipoproteins. Aids folding of multispanning membrane proteins. The chain is Membrane protein insertase YidC from Vibrio vulnificus (strain CMCP6).